The chain runs to 340 residues: Phosphoribosylformylglycinamidine cyclo-ligase (340 aa).

The protein belongs to the AIR synthase family.

Its subcellular location is the cytoplasm. It carries out the reaction 2-formamido-N(1)-(5-O-phospho-beta-D-ribosyl)acetamidine + ATP = 5-amino-1-(5-phospho-beta-D-ribosyl)imidazole + ADP + phosphate + H(+). It functions in the pathway purine metabolism; IMP biosynthesis via de novo pathway; 5-amino-1-(5-phospho-D-ribosyl)imidazole from N(2)-formyl-N(1)-(5-phospho-D-ribosyl)glycinamide: step 2/2. In Streptococcus pneumoniae serotype 19F (strain G54), this protein is Phosphoribosylformylglycinamidine cyclo-ligase.